The primary structure comprises 233 residues: Probable cyclic nucleotide phosphodiesterase COSY_0614 (233 aa).

Fe cation is bound by residues aspartate 10, histidine 12, aspartate 48, asparagine 78, histidine 144, histidine 183, and histidine 185. AMP-binding positions include histidine 12, aspartate 48, and 78 to 79 (NH). Histidine 185 contacts AMP.

It belongs to the cyclic nucleotide phosphodiesterase class-III family. The cofactor is Fe(2+).

This is Probable cyclic nucleotide phosphodiesterase COSY_0614 from Vesicomyosocius okutanii subsp. Calyptogena okutanii (strain HA).